The primary structure comprises 370 residues: Phospho-2-dehydro-3-deoxyheptonate aldolase, tyrosine-inhibited (370 aa).

The residue at position 2 (S2) is an N-acetylserine.

It belongs to the class-I DAHP synthase family.

The enzyme catalyses D-erythrose 4-phosphate + phosphoenolpyruvate + H2O = 7-phospho-2-dehydro-3-deoxy-D-arabino-heptonate + phosphate. It functions in the pathway metabolic intermediate biosynthesis; chorismate biosynthesis; chorismate from D-erythrose 4-phosphate and phosphoenolpyruvate: step 1/7. Its activity is regulated as follows. Inhibited by tyrosine. Its function is as follows. Stereospecific condensation of phosphoenolpyruvate (PEP) and D-erythrose-4-phosphate (E4P) giving rise to 3-deoxy-D-arabino-heptulosonate-7-phosphate (DAHP). This is Phospho-2-dehydro-3-deoxyheptonate aldolase, tyrosine-inhibited (ARO4) from Saccharomyces cerevisiae (strain ATCC 204508 / S288c) (Baker's yeast).